We begin with the raw amino-acid sequence, 216 residues long: Imidazoleglycerol-phosphate dehydratase (216 aa).

Position 211 is a phosphoserine (Ser-211).

Belongs to the imidazoleglycerol-phosphate dehydratase family.

It carries out the reaction D-erythro-1-(imidazol-4-yl)glycerol 3-phosphate = 3-(imidazol-4-yl)-2-oxopropyl phosphate + H2O. It participates in amino-acid biosynthesis; L-histidine biosynthesis; L-histidine from 5-phospho-alpha-D-ribose 1-diphosphate: step 6/9. The sequence is that of Imidazoleglycerol-phosphate dehydratase (his5) from Schizosaccharomyces pombe (strain 972 / ATCC 24843) (Fission yeast).